A 279-amino-acid chain; its full sequence is Nitrate import permease protein NrtB (279 aa).

5 helical membrane passes run F25–I45, V91–M111, A149–I169, V200–A220, and I249–W269. In terms of domain architecture, ABC transmembrane type-1 spans I84 to V267.

Belongs to the binding-protein-dependent transport system permease family. CysTW subfamily. As to quaternary structure, the complex is composed of two ATP-binding proteins (NrtC and NrtD), two transmembrane proteins (NrtB) and a solute-binding protein (NrtA).

The protein resides in the cell inner membrane. Functionally, part of the ABC transporter complex NrtABCD involved in nitrate uptake. The complex is probably also involved in nitrite transport. Probably responsible for the translocation of the substrate across the membrane. The protein is Nitrate import permease protein NrtB of Synechococcus elongatus (strain ATCC 33912 / PCC 7942 / FACHB-805) (Anacystis nidulans R2).